The chain runs to 258 residues: Chemokine-binding protein (258 aa).

An N-terminal signal peptide occupies residues 1–17 (MKQYIVLACMCLAAAAM). Residues 65–93 (TEITESESDPDPEVESEDDSTSVEDVDPP) form a disordered region. Over residues 68-91 (TESESDPDPEVESEDDSTSVEDVD) the composition is skewed to acidic residues.

This sequence belongs to the orthopoxvirus OPG001 family. In terms of assembly, binds to host CC chemokines, such as RANTES/CCL5, MIP-1alpha/CCL3, MCP-1/CCL2 and eotaxin.

The protein localises to the secreted. In terms of biological role, inhibits host immune defense by binding to host chemokines. Binds host CC chemokines (beta chemokines) such as RANTES with high affinity, but not CXC or C chemokines (alpha and gamma chemokines). This Homo sapiens (Human) protein is Chemokine-binding protein (OPG001).